Here is a 200-residue protein sequence, read N- to C-terminus: uncharacterized protein (200 aa).

The region spanning 1–191 is the AMMECR1 domain; sequence MTSANIQMAV…LDYKDYVNYK (191 aa).

This is an uncharacterized protein from Caenorhabditis elegans.